The primary structure comprises 897 residues: Interleukin enhancer-binding factor 3 (897 aa).

The DZF domain maps to 5–378 (RIFVNDDRHV…PMKRPMEEDG (374 aa)). The segment at 52–85 (QEKGNSELSEAENMDTPPDDESKEGAGEQKAEHM) is disordered. Over residues 60–73 (SEAENMDTPPDDES) the composition is skewed to acidic residues. Thr-67 is subject to Phosphothreonine. The span at 74 to 85 (KEGAGEQKAEHM) shows a compositional bias: basic and acidic residues. Lys-100 is modified (N6-acetyllysine). The residue at position 188 (Thr-188) is a Phosphothreonine; by PKR. Phosphoserine is present on Ser-190. Lys-297 is covalently cross-linked (Glycyl lysine isopeptide (Lys-Gly) (interchain with G-Cter in ubiquitin)). The residue at position 315 (Thr-315) is a Phosphothreonine; by PKR. Residue Lys-348 forms a Glycyl lysine isopeptide (Lys-Gly) (interchain with G-Cter in SUMO1) linkage. The disordered stretch occupies residues 363–401 (TTYAITPMKRPMEEDGEEKSPSKKKKKIQKKEEKAEPPQ). The Bipartite nuclear localization signal signature appears at 371 to 389 (KRPMEEDGEEKSPSKKKKK). Residues 372–383 (RPMEEDGEEKSP) are compositionally biased toward basic and acidic residues. 2 positions are modified to phosphoserine: Ser-382 and Ser-384. A Glycyl lysine isopeptide (Lys-Gly) (interchain with G-Cter in SUMO2) cross-link involves residue Lys-396. Residues 398-467 (EPPQAMNALM…AVKVLQDMGL (70 aa)) enclose the DRBM 1 domain. Lys-460 carries the N6-acetyllysine modification. 3 disordered regions span residues 466 to 524 (GLPT…LTKH), 624 to 662 (GMGG…GTNH), and 720 to 897 (GDSY…YQYR). The span at 472-481 (EGRDSSKGED) shows a compositional bias: basic and acidic residues. A phosphoserine mark is found at Ser-476, Ser-477, Ser-482, and Ser-486. A Glycyl lysine isopeptide (Lys-Gly) (interchain with G-Cter in SUMO2) cross-link involves residue Lys-489. A compositionally biased stretch (low complexity) spans 499–508 (VEAVSNPSSV). The DRBM 2 domain occupies 524-590 (HGKNPVMELN…ALAALEKLFP (67 aa)). Positions 609–897 (RGGPKFAAKP…TEHSMNYQYR (289 aa)) are interaction with PRMT1. Positions 644–662 (RGGNIRGRGRGRGFGGTNH) are enriched in gly residues. Low complexity-rich tracts occupy residues 745–769 (SYSS…SSYG), 783–794 (GSYSSYSNSYNS), and 802–812 (DYSYDSKFNYS). Phosphoserine occurs at positions 794, 812, 814, and 818. Residues 813-822 (GSGGRSGGNS) show a composition bias toward gly residues. Low complexity predominate over residues 823–833 (YGSSGSSYNTG). Positions 834-844 (SHGGYGAGSGG) are enriched in gly residues. Over residues 845–885 (SSSYQGKQGGYSSQSNYSSPGSSQSYSGPASSYQSSQGGYS) the composition is skewed to low complexity.

Identified in a IGF2BP1-dependent mRNP granule complex containing untranslated mRNAs. Interacts with FUS and SMN. Interacts (via C-terminus) with PRMT1. Forms a complex with ILF2. Can also bind to PRKDC/XRCC7: this may stabilize the interaction of PRKDC/XRCC7 and the heterodimeric complex of XRCC6/KU70 and XRCC5/KU80. Forms a heteromeric complex with ZNF346 and ILF3. Found in a nuclear export complex with XPO5, ILF3, Ran and double-stranded RNA or double-stranded minihelix VA1 RNA. Found in a nuclear export complex with XPO5, RAN, ILF3, ZNF346 and double-stranded RNA. Interacts with XPO5 and ZNF346. Forms a complex with ILF2, YLPM1, KHDRBS1, RBMX, NCOA5 and PPP1CA. Interacts with AGO1 and AGO2. Interacts with DHX36; this interaction occurs in a RNA-dependent manner. Interacts with ELAVL1; this interaction occurs in a RNA-dependent manner. Interacts with HAVCR2; this interaction promotes ILF3 ubiquitination and subsequent degradation. In terms of processing, phosphorylated at Thr-188 and Thr-315 by PKR in response to RNA viruses. This phosphorylation results in the dissociation of ILF2 from the ILF2-ILF3 complex resulting in a cytoplasmic sequestration of ILF3 where it can bind to viral RNAs and impede viral replication. Methylated by protein arginine N-methyltransferase 1.

The protein resides in the nucleus. It localises to the nucleolus. The protein localises to the cytoplasm. In terms of biological role, RNA-binding protein that plays an essential role in the biogenesis of circular RNAs (circRNAs) which are produced by back-splicing circularization of pre-mRNAs. Within the nucleus, promotes circRNAs processing by stabilizing the regulatory elements residing in the flanking introns of the circularized exons. Plays thereby a role in the back-splicing of a subset of circRNAs. As a consequence, participates in a wide range of transcriptional and post-transcriptional processes. Binds to poly-U elements and AU-rich elements (AREs) in the 3'-UTR of target mRNAs. Upon viral infection, ILF3 accumulates in the cytoplasm and participates in the innate antiviral response. Mechanistically, ILF3 becomes phosphorylated and activated by the double-stranded RNA-activated protein kinase/PKR which releases ILF3 from cellular mature circRNAs. In turn, unbound ILF3 molecules are able to interact with and thus inhibit viral mRNAs. This is Interleukin enhancer-binding factor 3 (Ilf3) from Rattus norvegicus (Rat).